A 225-amino-acid polypeptide reads, in one-letter code: Ribosome maturation factor RimM (225 aa).

Residues 144–225 (ADEFYWVDLI…RIVVDWEADY (82 aa)) enclose the PRC barrel domain.

Belongs to the RimM family. Binds ribosomal protein uS19.

Its subcellular location is the cytoplasm. An accessory protein needed during the final step in the assembly of 30S ribosomal subunit, possibly for assembly of the head region. Essential for efficient processing of 16S rRNA. May be needed both before and after RbfA during the maturation of 16S rRNA. It has affinity for free ribosomal 30S subunits but not for 70S ribosomes. The polypeptide is Ribosome maturation factor RimM (Burkholderia vietnamiensis (strain G4 / LMG 22486) (Burkholderia cepacia (strain R1808))).